A 273-amino-acid chain; its full sequence is Nickel permease LarQ (273 aa).

5 consecutive transmembrane segments (helical) span residues 64–84 (LIQL…ILLW), 117–137 (MLFV…FFGL), 159–179 (LAGL…AIAI), 210–230 (LIGA…LELY), and 251–271 (HWRD…FIFW).

The protein belongs to the CbiQ family. As to quaternary structure, may form an energy-coupling factor (ECF) transporter complex composed of an ATP-binding protein (A component, LarO), a transmembrane protein (T component, LarQ) and a fused possible substrate-capture protein (S component, LarMN) of unknown stoichiometry.

It is found in the cell membrane. Probable transmembrane component of the energy-coupling factor (ECF) transporter complex LarMNQO involved in nickel import. The polypeptide is Nickel permease LarQ (Lactiplantibacillus plantarum (strain ATCC BAA-793 / NCIMB 8826 / WCFS1) (Lactobacillus plantarum)).